A 78-amino-acid polypeptide reads, in one-letter code: UPF0349 protein GK2958 (78 aa).

It belongs to the UPF0349 family.

The protein is UPF0349 protein GK2958 of Geobacillus kaustophilus (strain HTA426).